Here is a 595-residue protein sequence, read N- to C-terminus: MLKPGDPGGSAFLKVDPAYLQHWQQLFPHGGAGPLKGSGAAGLLSAPQPLQPPPPPPPPERAEPPPDSLRPRPASLSSASSTPASSSTSASSASSCAAAAAAAALAGLSALPVSQLPVFAPLAAAAVAAEPLPPKELCLGATSGPGPVKCGGGGGGGGEGRGAPRFRCSAEELDYYLYGQQRMEIIPLNQHTSDPNNRCDMCADNRNGECPMHGPLHSLRRLVGTSSAAAAAPPPELPEWLRDLPREVCLCTSTVPGLAYGICAAQRIQQGTWIGPFQGVLLPPEKVQAGAVRNTQHLWEIYDQDGTLQHFIDGGEPSKSSWMRYIRCARHCGEQNLTVVQYRSNIFYRACIDIPRGTELLVWYNDSYTSFFGIPLQCIAQDENLNVPSTVMEAMCRQDALQPFNKSSKLAPTTQQRSVVFPQTPCSRNFSLLDKSGPIESGFNQINVKNQRVLASPTSTSQLHSEFSDWHLWKCGQCFKTFTQRILLQMHVCTQNPDRPYQCGHCSQSFSQPSELRNHVVTHSSDRPFKCGYCGRAFAGATTLNNHIRTHTGEKPFKCERCERSFTQATQLSRHQRMPNECKPITESPESIEVD.

The interval Phe27–Ala90 is disordered. Residues Gly30–Ala40 show a composition bias toward gly residues. The segment covering Pro49–Pro59 has biased composition (pro residues). Low complexity predominate over residues Pro71 to Ala90. The region spanning Arg246 to Asn365 is the SET domain. A C2H2-type 1; degenerate zinc finger spans residues Trp473–Gln495. C2H2-type zinc fingers lie at residues Tyr501 to His523 and Phe529 to His551. Residues Phe557–Pro579 form a C2H2-type 4; degenerate zinc finger.

It belongs to the class V-like SAM-binding methyltransferase superfamily. In terms of assembly, interacts with HDAC1, HDAC2, HDAC3, CBX1 and EP300.

The protein localises to the nucleus. The enzyme catalyses L-lysyl(20)-[histone H4] + S-adenosyl-L-methionine = N(6)-methyl-L-lysyl(20)-[histone H4] + S-adenosyl-L-homocysteine + H(+). In terms of biological role, putative histone methyltransferase that acts as a transcriptional repressor of smooth muscle gene expression. Promotes the transition from differentiated to proliferative smooth muscle by suppressing differentiation and maintaining the proliferative potential of vascular smooth muscle cells. Also plays a role in endothelial cells by inhibiting endothelial cell proliferation, survival and differentiation. It is unclear whether it has histone methyltransferase activity in vivo. According to some authors, it does not act as a histone methyltransferase by itself and represses transcription by recruiting EHMT2/G9a. According to others, it possesses histone methyltransferase activity when associated with other proteins and specifically methylates 'Lys-20' of histone H4 in vitro. 'Lys-20' methylation represents a specific tag for epigenetic transcriptional repression. This is Putative histone-lysine N-methyltransferase PRDM6 (PRDM6) from Homo sapiens (Human).